Here is a 512-residue protein sequence, read N- to C-terminus: Sucrose transport protein SUC5 (512 aa).

Positions Met1 to Gln27 are disordered. The Cytoplasmic segment spans residues Met1–Lys33. Polar residues predominate over residues Asn11–Pro22. The residue at position 20 (Ser20) is a Phosphoserine. A helical transmembrane segment spans residues Ile34–Leu54. Residues Leu55 to Lys67 lie on the Extracellular side of the membrane. Residues Trp68–Gly88 form a helical membrane-spanning segment. Over Tyr89–Arg102 the chain is Cytoplasmic. The helical transmembrane segment at Pro103–Ala123 threads the bilayer. Over Asp124–Arg140 the chain is Extracellular. The chain crosses the membrane as a helical span at residues Ala141–Gly161. Residues Pro162–Arg179 lie on the Cytoplasmic side of the membrane. A helical transmembrane segment spans residues Val180–Gly200. The Extracellular portion of the chain corresponds to Ser201–Lys225. A helical membrane pass occupies residues Thr226–Val246. Topologically, residues Lys247–Pro281 are cytoplasmic. Residues Met282–Tyr302 traverse the membrane as a helical segment. Residues Asp303–Gly333 are Extracellular-facing. A helical membrane pass occupies residues Ala334 to Ile354. The Cytoplasmic portion of the chain corresponds to Gly355–Arg363. A helical transmembrane segment spans residues Leu364 to Lys384. Residues Ser385–Gly406 are Extracellular-facing. Residues Val407–Ala427 traverse the membrane as a helical segment. Residues Leu428–Gln440 lie on the Cytoplasmic side of the membrane. The helical transmembrane segment at Gly441 to Ser461 threads the bilayer. Residues Ser462–Asn473 lie on the Extracellular side of the membrane. The helical transmembrane segment at Leu474–Val494 threads the bilayer. The Cytoplasmic portion of the chain corresponds to Leu495–His512.

This sequence belongs to the glycoside-pentoside-hexuronide (GPH) cation symporter transporter (TC 2.A.2.4) family. In terms of tissue distribution, widely expressed. Expressed in the endosperm and on the epidermis of the outer surface of the cotyledons of torpedo-stage or older embryos.

It localises to the cell membrane. The enzyme catalyses sucrose(out) + H(+)(out) = sucrose(in) + H(+)(in). The protein operates within glycan biosynthesis; sucrose metabolism. With respect to regulation, inhibited by protonophores (e.g. carbonyl cyanide m-chlorophenyl-hydrazone (CCCP)) and SH group inhibitors (e.g. p-chloromercuribenzene sulphonic acid (PCMBS)). Functionally, responsible in a heterologous system for the transport of sucrose into the cell, with the concomitant uptake of protons (symport system). Can also transport biotin, and probably maltose at a lesser rate. In planta, the role of SUC5 for the transport of sucrose seems to be negligible. Plays a role in the nutrition of the filial tissues during early seed development and is probably involved in the import of biotin into the endosperm and the embryo epidermis. This is Sucrose transport protein SUC5 from Arabidopsis thaliana (Mouse-ear cress).